The primary structure comprises 64 residues: MGNIRQTHIKNIAFRLVENYGDVFTTDFDKNKLLVSQYTTIEGKVIRNRVAGYVTRKIRYPKLI.

The protein belongs to the eukaryotic ribosomal protein eS17 family.

In Methanococcoides burtonii (strain DSM 6242 / NBRC 107633 / OCM 468 / ACE-M), this protein is Small ribosomal subunit protein eS17.